The chain runs to 2265 residues: Collagen alpha-6(VI) chain (2265 aa).

Positions 1–18 are cleaved as a signal peptide; sequence MLLVLCLTMICFHVCVNQ. Residues 19 to 1390 are nonhelical region; the sequence is DSGPEYADVV…TCCCLLCKCT (1372 aa). 7 VWFA domains span residues 26–205, 228–406, 435–605, 621–790, 808–981, 999–1170, and 1186–1378; these read DVVF…IKDV, DVVF…LKKL, DIYL…RNQV, DIMF…EDDL, DVVF…FSDV, DLVF…KKRI, and DVVV…INVA. N-linked (GlcNAc...) asparagine glycans are attached at residues N197, N238, and N346. N-linked (GlcNAc...) asparagine glycosylation occurs at N760. The triple-helical region stretch occupies residues 1391–1724; sequence GGDGAMGDPG…GRKGVKGARG (334 aa). The disordered stretch occupies residues 1398-1722; it reads DPGSAGKKGP…PPGRKGVKGA (325 aa). A compositionally biased stretch (acidic residues) spans 1455 to 1470; it reads EEGEVGEDGLDGLDGE. Basic and acidic residues predominate over residues 1497 to 1507; sequence AAGDRGAKGLR. The Cell attachment site signature appears at 1507 to 1509; the sequence is RGD. A compositionally biased stretch (basic residues) spans 1546–1558; that stretch reads SRRKMVVHGRRGH. The tract at residues 1725–2265 is nonhelical region; the sequence is LASFSTCDLI…ATSKLGKRSA (541 aa). 2 VWFA domains span residues 1756 to 1936 and 1964 to 2165; these read ELVF…ERLQ and DTAF…INSI. The interval 2186 to 2205 is disordered; that stretch reads SRDLKPPPRQFRSFVPGPQK.

The protein belongs to the type VI collagen family. Trimers composed of three different chains: alpha-1(VI), alpha-2(VI), and alpha-3(VI) or alpha-4(VI) or alpha-5(VI) or alpha-6(VI). Prolines at the third position of the tripeptide repeating unit (G-X-Y) are hydroxylated in some or all of the chains. In terms of tissue distribution, in newborn, it is expressed in lung, heart, kidney, muscle, brain, intestine, skin, femur and sternum. In adult, it is expressed in lung, heart, muscle, ovary, brain, liver and sternum.

It localises to the secreted. The protein localises to the extracellular space. Its subcellular location is the extracellular matrix. In terms of biological role, collagen VI acts as a cell-binding protein. This chain is Collagen alpha-6(VI) chain (Col6a6), found in Mus musculus (Mouse).